A 525-amino-acid polypeptide reads, in one-letter code: Ribosomal protein S6 kinase beta-1 (525 aa).

The TOS motif motif lies at 28-32 (FDIDL). A compositionally biased stretch (acidic residues) spans 32–46 (LDQPEDAGSEDELEE). Residues 32–54 (LDQPEDAGSEDELEEGGQLNESM) are disordered. Residues 91–352 (FELLRVLGKG…AGEVQAHPFF (262 aa)) form the Protein kinase domain. ATP is bound by residues 97–105 (LGKGGYGKV) and Lys-123. Asp-218 serves as the catalytic Proton acceptor. A Phosphothreonine; by PDPK1 modification is found at Thr-252. The AGC-kinase C-terminal domain maps to 353–423 (RHINWEELLA…VAPSVLESVK (71 aa)). The disordered stretch occupies residues 380 to 399 (SQFDSKFTRQTPVDSPDDST). Over residues 381-399 (QFDSKFTRQTPVDSPDDST) the composition is skewed to polar residues. Residue Ser-394 is modified to Phosphoserine. Position 412 is a phosphothreonine; by MTOR, NEK6 and NEK7 (Thr-412). An autoinhibitory domain region spans residues 424–525 (EKFSFEPKIR…KRPEHLRMNL (102 aa)). Ser-434 and Ser-441 each carry phosphoserine. Thr-444 carries the phosphothreonine modification. Residues Ser-447 and Ser-452 each carry the phosphoserine modification. N6-acetyllysine is present on Lys-516.

It belongs to the protein kinase superfamily. AGC Ser/Thr protein kinase family. S6 kinase subfamily. As to quaternary structure, interacts with PPP1R9A/neurabin-1. Interacts with RPTOR. Interacts with IRS1. Interacts with EIF3B and EIF3C. Interacts with TRAF4. Interacts with POLDIP3. Interacts (via N-terminus) with IER5. Post-translationally, phosphorylation at Thr-412 is regulated by mTORC1. The phosphorylation at this site is maintained by an agonist-dependent autophosphorylation mechanism. Activated by phosphorylation at Thr-252 by PDPK1. Dephosphorylation by PPP1CC at Thr-412 in mitochondrion.

Its subcellular location is the cytoplasm. The protein resides in the synapse. It localises to the synaptosome. It is found in the mitochondrion outer membrane. The protein localises to the mitochondrion. It catalyses the reaction L-seryl-[protein] + ATP = O-phospho-L-seryl-[protein] + ADP + H(+). It carries out the reaction L-threonyl-[protein] + ATP = O-phospho-L-threonyl-[protein] + ADP + H(+). With respect to regulation, activation requires multiple phosphorylation events on serine/threonine residues. Activation appears to be first mediated by phosphorylation of multiple sites in the autoinhibitory domain, which facilitates phosphorylation at Thr-412, disrupting the autoinhibitory mechanism and allowing phosphorylation of Thr-252 by PDPK1. The active conformation of the kinase is believed to be stabilized by a mechanism involving three conserved phosphorylation sites located in the kinase domain activation loop (Thr-252) and in the AGC-kinase C-terminal domain (Ser-394 in the middle of the tail/linker region and Thr-412 within a hydrophobic motif at its end). Activated by mTORC1; isoform Alpha I and isoform Alpha II are sensitive to rapamycin, which inhibits activating phosphorylation at Thr-412. Activated by PDPK1. In terms of biological role, serine/threonine-protein kinase that acts downstream of mTOR signaling in response to growth factors and nutrients to promote cell proliferation, cell growth and cell cycle progression. Regulates protein synthesis through phosphorylation of EIF4B, RPS6 and EEF2K, and contributes to cell survival by repressing the pro-apoptotic function of BAD. Under conditions of nutrient depletion, the inactive form associates with the EIF3 translation initiation complex. Upon mitogenic stimulation, phosphorylation by the mechanistic target of rapamycin complex 1 (mTORC1) leads to dissociation from the EIF3 complex and activation. The active form then phosphorylates and activates several substrates in the pre-initiation complex, including the EIF2B complex and the cap-binding complex component EIF4B. Also controls translation initiation by phosphorylating a negative regulator of EIF4A, PDCD4, targeting it for ubiquitination and subsequent proteolysis. Promotes initiation of the pioneer round of protein synthesis by phosphorylating POLDIP3/SKAR. In response to IGF1, activates translation elongation by phosphorylating EEF2 kinase (EEF2K), which leads to its inhibition and thus activation of EEF2. Also plays a role in feedback regulation of mTORC2 by mTORC1 by phosphorylating MAPKAP1/SIN1, MTOR and RICTOR, resulting in the inhibition of mTORC2 and AKT1 signaling. Also involved in feedback regulation of mTORC1 and mTORC2 by phosphorylating DEPTOR. Mediates cell survival by phosphorylating the pro-apoptotic protein BAD and suppressing its pro-apoptotic function. Phosphorylates mitochondrial URI1 leading to dissociation of a URI1-PPP1CC complex. The free mitochondrial PPP1CC can then dephosphorylate RPS6KB1 at Thr-412, which is proposed to be a negative feedback mechanism for the RPS6KB1 anti-apoptotic function. Mediates TNF-alpha-induced insulin resistance by phosphorylating IRS1 at multiple serine residues, resulting in accelerated degradation of IRS1. In cells lacking functional TSC1-2 complex, constitutively phosphorylates and inhibits GSK3B. May be involved in cytoskeletal rearrangement through binding to neurabin. Phosphorylates and activates the pyrimidine biosynthesis enzyme CAD, downstream of MTOR. Following activation by mTORC1, phosphorylates EPRS and thereby plays a key role in fatty acid uptake by adipocytes and also most probably in interferon-gamma-induced translation inhibition. The sequence is that of Ribosomal protein S6 kinase beta-1 (Rps6kb1) from Mus musculus (Mouse).